Consider the following 288-residue polypeptide: Ribosomal RNA small subunit methyltransferase A (288 aa).

S-adenosyl-L-methionine contacts are provided by N18, L20, G45, E66, D91, and N118.

It belongs to the class I-like SAM-binding methyltransferase superfamily. rRNA adenine N(6)-methyltransferase family. RsmA subfamily.

It is found in the cytoplasm. The enzyme catalyses adenosine(1518)/adenosine(1519) in 16S rRNA + 4 S-adenosyl-L-methionine = N(6)-dimethyladenosine(1518)/N(6)-dimethyladenosine(1519) in 16S rRNA + 4 S-adenosyl-L-homocysteine + 4 H(+). Its function is as follows. Specifically dimethylates two adjacent adenosines (A1518 and A1519) in the loop of a conserved hairpin near the 3'-end of 16S rRNA in the 30S particle. May play a critical role in biogenesis of 30S subunits. The polypeptide is Ribosomal RNA small subunit methyltransferase A (Pasteurella multocida (strain Pm70)).